Here is a 346-residue protein sequence, read N- to C-terminus: MAIRWSELCIVLFALSYAICVLAGKSYYDVLQVPKGASDEQIKRAYRKLALKYHPDKNQGNEEATRKFAEINNAYEVLSDEEKREIYNKYGEEGLKQFSANGGRGGGGGGMNMQDIFSSFFGGGSMEEEEKVVKGDDVIVELEATLEDLYMGGSMKVWREKNVIKPAPGKRKCNCRNEVYHRQIGPGMFQQMTEQVCDKCPNVKYEREGYFVTVDIEKGMKDGEEVSFYEDGEPILDGDPGDLKFRIRTAPHARFRRDGNDLHMNVNITLVEALVGFEKSFKHLDDHEVDISSKGITKPKEVKKFKGEGMPLHYSTKKGNLFVTFEVLFPSSLTDDQKKKIKEVFA.

The signal sequence occupies residues 1–23 (MAIRWSELCIVLFALSYAICVLA). The J domain maps to 26–91 (SYYDVLQVPK…EKREIYNKYG (66 aa)). N-linked (GlcNAc...) asparagine glycosylation is present at N267.

As to quaternary structure, interacts with SDF2 and MED37A/BIP1. In terms of processing, N-glycosylated. Expressed in leaves, flower buds and flowers.

The protein resides in the endoplasmic reticulum lumen. Regulates protein folding in the endoplasmic reticulum (ER) lumen. Forms a complex in the ER with SDF2 and MED37A/BIP1 which is required for the proper accumulation and function of the surface-exposed leucine-rich repeat receptor kinases EFR involved in pathogen-associated molecular pattern (PAMP) triggered immunity. This is DnaJ protein ERDJ3B (ERDJ3B) from Arabidopsis thaliana (Mouse-ear cress).